We begin with the raw amino-acid sequence, 358 residues long: Peptide chain release factor 1 (358 aa).

Residue glutamine 237 is modified to N5-methylglutamine.

It belongs to the prokaryotic/mitochondrial release factor family. Post-translationally, methylated by PrmC. Methylation increases the termination efficiency of RF1.

The protein resides in the cytoplasm. Functionally, peptide chain release factor 1 directs the termination of translation in response to the peptide chain termination codons UAG and UAA. The protein is Peptide chain release factor 1 of Streptomyces coelicolor (strain ATCC BAA-471 / A3(2) / M145).